The primary structure comprises 306 residues: MDALDRVVKPKTKRAKRFLEKREPKLSENIKNAMLIKGGNANSTVTQVLRDVYALKKPYGILYKKKNITRPFEDQTSLEFFSKKSDCSLFMFGSHNKKRPNNLVIGRMYDYHVLDIIELGIEKFVSLKDIKNSKCPEGTKPMLIFAGDDFDVTEDYRRLKSLLIDFFRGPTVSNIRLAGLEYVLHFTALNGKIYFRSYKLLLKKSGCRTPRIELEEMGPSLDLVLRRTHLASDDLYKLSMKMPKALKPKKKKNISHDTFGTTYGRIHMQKQDLSKLQTRKMKGLKKRPAERKAEDEENKSKRIKKN.

In terms of domain architecture, Brix spans 31 to 234 (KNAMLIKGGN…LRRTHLASDD (204 aa)). Residues 268 to 306 (MQKQDLSKLQTRKMKGLKKRPAERKAEDEENKSKRIKKN) are disordered. The segment covering 277–289 (QTRKMKGLKKRPA) has biased composition (basic residues). The span at 290–300 (ERKAEDEENKS) shows a compositional bias: basic and acidic residues.

Belongs to the RPF2 family. Component of a hexameric 5S RNP precursor complex, composed of 5S RNA, RRS1, RPF2/BXDC1, RPL5, RPL11 and HEATR3; this complex acts as a precursor for ribosome assembly.

The protein resides in the nucleus. It localises to the nucleolus. In terms of biological role, involved in ribosomal large subunit assembly. May regulate the localization of the 5S RNP/5S ribonucleoprotein particle to the nucleolus. This Bos taurus (Bovine) protein is Ribosome production factor 2 homolog (RPF2).